The primary structure comprises 140 residues: Nucleoside diphosphate kinase (140 aa).

ATP contacts are provided by Lys11, Phe59, Arg87, Thr93, Arg104, and Asn114. His117 acts as the Pros-phosphohistidine intermediate in catalysis.

The protein belongs to the NDK family. As to quaternary structure, homotetramer. Mg(2+) is required as a cofactor.

Its subcellular location is the cytoplasm. The enzyme catalyses a 2'-deoxyribonucleoside 5'-diphosphate + ATP = a 2'-deoxyribonucleoside 5'-triphosphate + ADP. The catalysed reaction is a ribonucleoside 5'-diphosphate + ATP = a ribonucleoside 5'-triphosphate + ADP. In terms of biological role, major role in the synthesis of nucleoside triphosphates other than ATP. The ATP gamma phosphate is transferred to the NDP beta phosphate via a ping-pong mechanism, using a phosphorylated active-site intermediate. The sequence is that of Nucleoside diphosphate kinase from Bradyrhizobium diazoefficiens (strain JCM 10833 / BCRC 13528 / IAM 13628 / NBRC 14792 / USDA 110).